Consider the following 397-residue polypeptide: DNA-directed RNA polymerase subunit Rpo1C (397 aa).

The protein belongs to the RNA polymerase beta' chain family. As to quaternary structure, part of the RNA polymerase complex. An artificial construct of the RNAP clamp domain (including part of this protein) contacts transcription elongation factors Spt4 and Spt5.

It localises to the cytoplasm. The enzyme catalyses RNA(n) + a ribonucleoside 5'-triphosphate = RNA(n+1) + diphosphate. Functionally, DNA-dependent RNA polymerase (RNAP) catalyzes the transcription of DNA into RNA using the four ribonucleoside triphosphates as substrates. Forms part of the jaw domain. This is DNA-directed RNA polymerase subunit Rpo1C from Pyrococcus furiosus (strain ATCC 43587 / DSM 3638 / JCM 8422 / Vc1).